We begin with the raw amino-acid sequence, 272 residues long: 2-dehydro-3-deoxyphosphooctonate aldolase (272 aa).

Belongs to the KdsA family.

It localises to the cytoplasm. It catalyses the reaction D-arabinose 5-phosphate + phosphoenolpyruvate + H2O = 3-deoxy-alpha-D-manno-2-octulosonate-8-phosphate + phosphate. It participates in carbohydrate biosynthesis; 3-deoxy-D-manno-octulosonate biosynthesis; 3-deoxy-D-manno-octulosonate from D-ribulose 5-phosphate: step 2/3. The protein operates within bacterial outer membrane biogenesis; lipopolysaccharide biosynthesis. The protein is 2-dehydro-3-deoxyphosphooctonate aldolase of Trichlorobacter lovleyi (strain ATCC BAA-1151 / DSM 17278 / SZ) (Geobacter lovleyi).